Here is a 291-residue protein sequence, read N- to C-terminus: Porphobilinogen deaminase (291 aa).

The residue at position 237 (Cys237) is an S-(dipyrrolylmethanemethyl)cysteine.

It belongs to the HMBS family. In terms of assembly, monomer. The cofactor is dipyrromethane.

The enzyme catalyses 4 porphobilinogen + H2O = hydroxymethylbilane + 4 NH4(+). It participates in porphyrin-containing compound metabolism; protoporphyrin-IX biosynthesis; coproporphyrinogen-III from 5-aminolevulinate: step 2/4. Functionally, tetrapolymerization of the monopyrrole PBG into the hydroxymethylbilane pre-uroporphyrinogen in several discrete steps. The sequence is that of Porphobilinogen deaminase from Clostridium perfringens (strain SM101 / Type A).